We begin with the raw amino-acid sequence, 747 residues long: Probable cyclic nucleotide-gated ion channel 6 (747 aa).

At 1–117 the chain is on the cytoplasmic side; the sequence is MFDTCGPKGV…DKFLLLCNKL (117 aa). Residues 118–138 traverse the membrane as a helical segment; that stretch reads FVASCILAVSVDPLFLYLPFI. Residues 139 to 150 lie on the Extracellular side of the membrane; it reads NDKAKCVGIDRK. Residues 151-171 form a helical membrane-spanning segment; that stretch reads LAIIVTTIRTVIDSFYLFHMA. Residues 172 to 205 are Cytoplasmic-facing; it reads LRFRTAYVAPSSRVFGRGELVIDPAQIAKRYLQQ. A helical membrane pass occupies residues 206 to 226; it reads YFIIDLLSVLPVPQIIVWRFL. Over 227–239 the chain is Extracellular; the sequence is YTSRGANVLATKQ. A helical transmembrane segment spans residues 240–260; it reads ALRYIVLVQYIPRFLRMYPLS. At 261–280 the chain is on the cytoplasmic side; the sequence is SELKRTAGVFAETAWAGAAY. Residues 281-301 traverse the membrane as a helical segment; the sequence is YLLLYMLASHIVGALWYLLAL. At 302–407 the chain is on the extracellular side; the sequence is ERNNDCWSKA…GQGLETSTYP (106 aa). A helical membrane pass occupies residues 408-428; that stretch reads GEVIFSITLAIAGLLLFALLI. Over 429–747 the chain is Cytoplasmic; the sequence is GNMQTYLQSL…PEPDFSAEDH (319 aa). Residues 514–638 and Asp585 contribute to the a nucleoside 3',5'-cyclic phosphate site; that span reads LFEN…SRQV. Positions 630-645 are calmodulin-binding; sequence FRRLHSRQVQHTFRFY. The IQ domain occupies 650-679; the sequence is RTWAACFMQAAWRRYIKRKKLEQLRKEEEE.

It belongs to the cyclic nucleotide-gated cation channel (TC 1.A.1.5) family. As to quaternary structure, homotetramer or heterotetramer.

It is found in the cell membrane. Its function is as follows. Probable cyclic nucleotide-gated ion channel. The chain is Probable cyclic nucleotide-gated ion channel 6 (CNGC6) from Arabidopsis thaliana (Mouse-ear cress).